We begin with the raw amino-acid sequence, 385 residues long: MIKEKRLRIAMVAGELSGDLLGAGVIRELKQHLTNVEFMGVGGPQMLKEGFHSLIDISELSVMGISDVLRRYPQLYLIRERLLREWTINPPDVFIGIDYPDFNLSVEARLKKQHIKTIHLVSPKVWAWRQKRVHLIKKAVDLVLTLFPFEEAFYLQHGVSAQFIGHPLADLIEINPSCSALRKKYNYHSDDTILAVLPGSRVGEIKYMGPLFLEVMQRIAMERPHVHFIVPIACQDLYPVFFKQLHAEYDYLKIQVIQGNAREAMAISDVVLTKSGTATLEAMLLKRPMVVAFKWGILTHAIIAPQVKVPYIALPNLLAGKKLIPEFVQEKANVDSITESVLNLLDSSNQNELIKQFTDIHRTLRQNANEKAALAILRILEDSLT.

It belongs to the LpxB family.

The catalysed reaction is a lipid X + a UDP-2-N,3-O-bis[(3R)-3-hydroxyacyl]-alpha-D-glucosamine = a lipid A disaccharide + UDP + H(+). It participates in bacterial outer membrane biogenesis; LPS lipid A biosynthesis. Condensation of UDP-2,3-diacylglucosamine and 2,3-diacylglucosamine-1-phosphate to form lipid A disaccharide, a precursor of lipid A, a phosphorylated glycolipid that anchors the lipopolysaccharide to the outer membrane of the cell. The chain is Lipid-A-disaccharide synthase 2 from Legionella pneumophila (strain Paris).